Here is a 310-residue protein sequence, read N- to C-terminus: Cytosolic Fe-S cluster assembly factor Nubp1 homolog (310 aa).

[4Fe-4S] cluster-binding residues include cysteine 8, cysteine 22, cysteine 25, and cysteine 31. 62–69 (GKGGVGKS) is a binding site for ATP. Positions 239 and 242 each coordinate [4Fe-4S] cluster.

Belongs to the Mrp/NBP35 ATP-binding proteins family. NUBP1/NBP35 subfamily. In terms of assembly, heterotetramer of 2 Nubp1 and 2 Nubp2 chains. The cofactor is [4Fe-4S] cluster.

It localises to the cytoplasm. In terms of biological role, component of the cytosolic iron-sulfur (Fe/S) protein assembly (CIA) machinery. Required for maturation of extramitochondrial Fe-S proteins. The Nubp1-Nubp2 heterotetramer forms a Fe-S scaffold complex, mediating the de novo assembly of an Fe-S cluster and its transfer to target apoproteins. This chain is Cytosolic Fe-S cluster assembly factor Nubp1 homolog, found in Drosophila willistoni (Fruit fly).